Consider the following 108-residue polypeptide: MPLWVFFFVILTLSNSSHCSPPPPLTLRMRRYADAIFTNSYRKVLGQLSARKLLQDIMSRQQGESNQERGARARLGRQVDSMWAEQKQMELESILVALLQKHSRNSQG.

The first 20 residues, 1–20 (MPLWVFFFVILTLSNSSHCS), serve as a signal peptide directing secretion. A propeptide spanning residues 21 to 31 (PPPPLTLRMRR) is cleaved from the precursor. Leu75 is subject to Leucine amide. Positions 78–108 (QVDSMWAEQKQMELESILVALLQKHSRNSQG) are excised as a propeptide.

It belongs to the glucagon family.

The protein localises to the secreted. GRF is released by the hypothalamus and acts on the adenohypophyse to stimulate the secretion of growth hormone. In Homo sapiens (Human), this protein is Somatoliberin (GHRH).